The sequence spans 305 residues: Phosphopantetheine adenylyltransferase (305 aa).

This sequence belongs to the eukaryotic CoaD family.

It is found in the cytoplasm. It localises to the nucleus. The enzyme catalyses (R)-4'-phosphopantetheine + ATP + H(+) = 3'-dephospho-CoA + diphosphate. In terms of biological role, reversibly transfers an adenylyl group from ATP to 4'-phosphopantetheine, yielding dephospho-CoA (dPCoA) and pyrophosphate. Plays a role in the physiological regulation of the intracellular CoA concentration. The polypeptide is Phosphopantetheine adenylyltransferase (CAB4) (Saccharomyces cerevisiae (strain ATCC 204508 / S288c) (Baker's yeast)).